Here is a 430-residue protein sequence, read N- to C-terminus: Adenylosuccinate synthetase (430 aa).

GTP contacts are provided by residues 12-18 (GDEGKGK) and 40-42 (GHT). Asp13 acts as the Proton acceptor in catalysis. The Mg(2+) site is built by Asp13 and Gly40. IMP-binding positions include 13-16 (DEGK), 38-41 (NAGH), Thr128, Arg142, Gln223, Thr238, and Arg302. His41 acts as the Proton donor in catalysis. 298–304 (TTTGRPR) provides a ligand contact to substrate. Residues Arg304, 330-332 (LLD), and 412-414 (SVG) contribute to the GTP site.

It belongs to the adenylosuccinate synthetase family. Homodimer. Requires Mg(2+) as cofactor.

The protein resides in the cytoplasm. The catalysed reaction is IMP + L-aspartate + GTP = N(6)-(1,2-dicarboxyethyl)-AMP + GDP + phosphate + 2 H(+). It participates in purine metabolism; AMP biosynthesis via de novo pathway; AMP from IMP: step 1/2. Its function is as follows. Plays an important role in the de novo pathway of purine nucleotide biosynthesis. Catalyzes the first committed step in the biosynthesis of AMP from IMP. The chain is Adenylosuccinate synthetase from Listeria welshimeri serovar 6b (strain ATCC 35897 / DSM 20650 / CCUG 15529 / CIP 8149 / NCTC 11857 / SLCC 5334 / V8).